A 321-amino-acid chain; its full sequence is tRNA(Ile)-lysidine synthase (321 aa).

30–35 is a binding site for ATP; sequence SGGSDS.

It belongs to the tRNA(Ile)-lysidine synthase family.

Its subcellular location is the cytoplasm. It carries out the reaction cytidine(34) in tRNA(Ile2) + L-lysine + ATP = lysidine(34) in tRNA(Ile2) + AMP + diphosphate + H(+). Its function is as follows. Ligates lysine onto the cytidine present at position 34 of the AUA codon-specific tRNA(Ile) that contains the anticodon CAU, in an ATP-dependent manner. Cytidine is converted to lysidine, thus changing the amino acid specificity of the tRNA from methionine to isoleucine. This is tRNA(Ile)-lysidine synthase from Chlamydia trachomatis serovar A (strain ATCC VR-571B / DSM 19440 / HAR-13).